Consider the following 325-residue polypeptide: Interleukin-10 receptor subunit beta (325 aa).

An N-terminal signal peptide occupies residues 1–19; it reads MAWSLGSWLGGCLLVSALG. Over 20-220 the chain is Extracellular; it reads MVPPPENVRM…QTTHDETVPS (201 aa). Fibronectin type-III domains are found at residues 23-111 and 114-216; these read PPEN…VDDT and GPPG…THDE. Asn-49, Asn-68, Asn-102, and Asn-161 each carry an N-linked (GlcNAc...) asparagine glycan. A disulfide bridge connects residues Cys-66 and Cys-74. The cysteines at positions 188 and 209 are disulfide-linked. The chain crosses the membrane as a helical span at residues 221–242; that stretch reads WMVAVILMASVFMVCLALLGCF. Over 243-325 the chain is Cytoplasmic; it reads ALLWCVYKKT…GTPPGQGPQS (83 aa). The tract at residues 301 to 325 is disordered; sequence DSESGKQNPGDSCSLGTPPGQGPQS. Over residues 305–315 the composition is skewed to polar residues; that stretch reads GKQNPGDSCSL.

The protein belongs to the type II cytokine receptor family. As to quaternary structure, heterodimer with IFNLR1.

The protein localises to the membrane. Functionally, shared cell surface receptor required for the activation of five class 2 cytokines: IL10, IL22, IL26, IL28, and IFNL1. The IFNLR1/IL10RB dimer is a receptor for the cytokine ligands IFNL2 and IFNL3 and mediates their antiviral activity. The ligand/receptor complex stimulate the activation of the JAK/STAT signaling pathway leading to the expression of IFN-stimulated genes (ISG), which contribute to the antiviral state. The protein is Interleukin-10 receptor subunit beta (IL10RB) of Homo sapiens (Human).